A 399-amino-acid polypeptide reads, in one-letter code: Probable tRNA sulfurtransferase (399 aa).

Residues 60–165 (YAVMERLKRV…TEGTYISCET (106 aa)) form the THUMP domain. Residues 183-184 (LL), 208-209 (HF), R265, G287, and Q296 each bind ATP.

This sequence belongs to the ThiI family.

It localises to the cytoplasm. The enzyme catalyses [ThiI sulfur-carrier protein]-S-sulfanyl-L-cysteine + a uridine in tRNA + 2 reduced [2Fe-2S]-[ferredoxin] + ATP + H(+) = [ThiI sulfur-carrier protein]-L-cysteine + a 4-thiouridine in tRNA + 2 oxidized [2Fe-2S]-[ferredoxin] + AMP + diphosphate. It catalyses the reaction [ThiS sulfur-carrier protein]-C-terminal Gly-Gly-AMP + S-sulfanyl-L-cysteinyl-[cysteine desulfurase] + AH2 = [ThiS sulfur-carrier protein]-C-terminal-Gly-aminoethanethioate + L-cysteinyl-[cysteine desulfurase] + A + AMP + 2 H(+). The protein operates within cofactor biosynthesis; thiamine diphosphate biosynthesis. Its function is as follows. Catalyzes the ATP-dependent transfer of a sulfur to tRNA to produce 4-thiouridine in position 8 of tRNAs, which functions as a near-UV photosensor. Also catalyzes the transfer of sulfur to the sulfur carrier protein ThiS, forming ThiS-thiocarboxylate. This is a step in the synthesis of thiazole, in the thiamine biosynthesis pathway. The sulfur is donated as persulfide by IscS. The polypeptide is Probable tRNA sulfurtransferase (Brevibacillus brevis (strain 47 / JCM 6285 / NBRC 100599)).